Reading from the N-terminus, the 200-residue chain is Probable GTP-binding protein EngB (200 aa).

An EngB-type G domain is found at 26-200; the sequence is SIPEIAIAGR…IYEIAQCIKK (175 aa). Residues 34–41, 61–65, 80–83, 147–150, and 176–179 each bind GTP; these read GRSNVGKS, GCTKQ, DLPG, TKID, and VISA. Residues Ser41 and Thr63 each coordinate Mg(2+).

It belongs to the TRAFAC class TrmE-Era-EngA-EngB-Septin-like GTPase superfamily. EngB GTPase family. Mg(2+) is required as a cofactor.

Its function is as follows. Necessary for normal cell division and for the maintenance of normal septation. The protein is Probable GTP-binding protein EngB of Ehrlichia canis (strain Jake).